A 174-amino-acid polypeptide reads, in one-letter code: Adenylate kinase (174 aa).

The segment at 12–41 is NMP; the sequence is STGDMLRAAIKAGTLLGLEAKKIIDEGGLV. AMP contacts are provided by residues T13, R18, 39 to 41, 67 to 70, and Q74; these read GLV and GFPR. The segment at 104–141 is LID; sequence GRRVHLASGRTYHVTYNPPKVEGKDDVTGEDLIQRDDD. Residues R105 and 114 to 115 contribute to the ATP site; that span reads TY. AMP is bound by residues R138 and R149.

The protein belongs to the adenylate kinase family. As to quaternary structure, monomer.

The protein localises to the cytoplasm. The catalysed reaction is AMP + ATP = 2 ADP. Its pathway is purine metabolism; AMP biosynthesis via salvage pathway; AMP from ADP: step 1/1. Its function is as follows. Catalyzes the reversible transfer of the terminal phosphate group between ATP and AMP. Plays an important role in cellular energy homeostasis and in adenine nucleotide metabolism. The protein is Adenylate kinase of Neisseria polysaccharea.